Consider the following 139-residue polypeptide: Large ribosomal subunit protein uL14A (139 aa).

Belongs to the universal ribosomal protein uL14 family. As to quaternary structure, component of the large ribosomal subunit (LSU). Mature yeast ribosomes consist of a small (40S) and a large (60S) subunit. The 40S small subunit contains 1 molecule of ribosomal RNA (18S rRNA) and at least 33 different proteins. The large 60S subunit contains 3 rRNA molecules (25S, 5.8S and 5S rRNA) and at least 46 different proteins.

The protein localises to the cytoplasm. It is found in the nucleus. Functionally, component of the ribosome, a large ribonucleoprotein complex responsible for the synthesis of proteins in the cell. The small ribosomal subunit (SSU) binds messenger RNAs (mRNAs) and translates the encoded message by selecting cognate aminoacyl-transfer RNA (tRNA) molecules. The large subunit (LSU) contains the ribosomal catalytic site termed the peptidyl transferase center (PTC), which catalyzes the formation of peptide bonds, thereby polymerizing the amino acids delivered by tRNAs into a polypeptide chain. The nascent polypeptides leave the ribosome through a tunnel in the LSU and interact with protein factors that function in enzymatic processing, targeting, and the membrane insertion of nascent chains at the exit of the ribosomal tunnel. This is Large ribosomal subunit protein uL14A (rpl2301) from Schizosaccharomyces pombe (strain 972 / ATCC 24843) (Fission yeast).